The primary structure comprises 237 residues: Probable transcriptional regulatory protein WS1016 (237 aa).

This sequence belongs to the TACO1 family.

It localises to the cytoplasm. This chain is Probable transcriptional regulatory protein WS1016, found in Wolinella succinogenes (strain ATCC 29543 / DSM 1740 / CCUG 13145 / JCM 31913 / LMG 7466 / NCTC 11488 / FDC 602W) (Vibrio succinogenes).